The chain runs to 188 residues: Xanthine phosphoribosyltransferase (188 aa).

Residues L20 and N27 each coordinate xanthine. Residue 127–131 (ANGNA) participates in 5-phospho-alpha-D-ribose 1-diphosphate binding. K155 lines the xanthine pocket.

The protein belongs to the purine/pyrimidine phosphoribosyltransferase family. Xpt subfamily. Homodimer.

The protein resides in the cytoplasm. The catalysed reaction is XMP + diphosphate = xanthine + 5-phospho-alpha-D-ribose 1-diphosphate. It participates in purine metabolism; XMP biosynthesis via salvage pathway; XMP from xanthine: step 1/1. Converts the preformed base xanthine, a product of nucleic acid breakdown, to xanthosine 5'-monophosphate (XMP), so it can be reused for RNA or DNA synthesis. The chain is Xanthine phosphoribosyltransferase from Phocaeicola vulgatus (strain ATCC 8482 / DSM 1447 / JCM 5826 / CCUG 4940 / NBRC 14291 / NCTC 11154) (Bacteroides vulgatus).